Consider the following 152-residue polypeptide: Transcriptional regulator MraZ (152 aa).

2 consecutive SpoVT-AbrB domains span residues 5 to 52 (VTSI…PLHE) and 81 to 124 (ATEC…QDKQ).

Belongs to the MraZ family. As to quaternary structure, forms oligomers.

It is found in the cytoplasm. The protein localises to the nucleoid. This chain is Transcriptional regulator MraZ, found in Actinobacillus pleuropneumoniae serotype 3 (strain JL03).